We begin with the raw amino-acid sequence, 194 residues long: MKIACDIPVSEVMSFPVIKATKNMSIYDIANIMTENNIGAVVIVENNKPIGIVTERDIVKRVVSKNLKPKDVLAEEVMSKKIITIPQNASITEAAKIMATHGIKRLPVVKDGELVGIVTQSDIVRVSPELLEIVIEYASITPEEKEVISLDTDEFSEEYINGICENCGYQGRVRLYQGRYLCDECIEEFEEKEE.

2 consecutive CBS domains span residues 13–72 (MSFP…PKDV) and 78–133 (MSKK…LLEI). One can recognise an ACP-type MB domain in the interval 159-192 (YINGICENCGYQGRVRLYQGRYLCDECIEEFEEK). Positions 164, 167, 182, and 185 each coordinate Fe cation. Cys164, Cys167, Cys182, and Cys185 together coordinate Zn(2+).

This is an uncharacterized protein from Methanocaldococcus jannaschii (strain ATCC 43067 / DSM 2661 / JAL-1 / JCM 10045 / NBRC 100440) (Methanococcus jannaschii).